Here is a 347-residue protein sequence, read N- to C-terminus: NADH-ubiquinone oxidoreductase chain 2 (347 aa).

The next 11 membrane-spanning stretches (helical) occupy residues 1 to 21 (MNPA…MIVT), 25 to 45 (HWLT…PILM), 59 to 79 (YFLT…INLV), 96 to 116 (ITMT…FWVP), 127 to 147 (GLIL…QISP), 149 to 169 (INLE…GWGG), 178 to 198 (IMAY…AYNP), 201 to 221 (TLLN…MLML), 240 to 260 (LATT…LSGF), 274 to 294 (DSII…YFYM), and 326 to 346 (ISPL…LTLL).

This sequence belongs to the complex I subunit 2 family. In terms of assembly, core subunit of respiratory chain NADH dehydrogenase (Complex I) which is composed of 45 different subunits. Interacts with TMEM242.

It localises to the mitochondrion inner membrane. The catalysed reaction is a ubiquinone + NADH + 5 H(+)(in) = a ubiquinol + NAD(+) + 4 H(+)(out). Its function is as follows. Core subunit of the mitochondrial membrane respiratory chain NADH dehydrogenase (Complex I) which catalyzes electron transfer from NADH through the respiratory chain, using ubiquinone as an electron acceptor. Essential for the catalytic activity and assembly of complex I. This chain is NADH-ubiquinone oxidoreductase chain 2, found in Dobsonia minor (Lesser bare-backed fruit bat).